Consider the following 360-residue polypeptide: Melanoma-associated antigen B16 (360 aa).

The disordered stretch occupies residues 1 to 118 (MSQKNPEYAA…GNSVIPPDQP (118 aa)). A compositionally biased stretch (basic and acidic residues) spans 9 to 19 (AADHDHTREEM). Polar residues predominate over residues 63–98 (CSSSQLLTASNQEDPAYETPSTSRGLQHPYVSSSES). The region spanning 125-324 (IDGKVNFLVN…TVFPSQYEEA (200 aa)) is the MAGE domain. Residues 340-360 (AGPSSASGESSSDMGSNVPHI) form a disordered region. The span at 341–360 (GPSSASGESSSDMGSNVPHI) shows a compositional bias: low complexity.

The protein is Melanoma-associated antigen B16 (Mageb16) of Rattus norvegicus (Rat).